A 655-amino-acid chain; its full sequence is p-hydroxybenzoic acid efflux pump subunit AaeB (655 aa).

The next 11 membrane-spanning stretches (helical) occupy residues 13–33 (FAVKLATAIVLALFVGFHFQL), 38–58 (WAVLTAAIVAAGPAFAAGGEP), 69–89 (LRIIGTFIGCIAGLVIIIAMI), 93–113 (LLMILVCCIWAGFCTWISSLV), 121–141 (WGLAGYTALIIVITIQPEPLL), 152–172 (EIVIGIVCAIMADLLFSPRSI), 370–390 (LFWLWTGWTSGSGAMVMIAVV), 407–427 (FIYGTLAALPLGLLYFLVIIP), 431–451 (QSMLLLCISLAVLGFFLGIEV), 459–479 (MGALASTINIIVLDNPMTFHF), and 482–502 (FLDSALGQIVGCVLAFTVILL).

This sequence belongs to the aromatic acid exporter ArAE (TC 2.A.85) family.

The protein resides in the cell inner membrane. Forms an efflux pump with AaeA. Could function as a metabolic relief valve, allowing to eliminate certain compounds when they accumulate to high levels in the cell. This chain is p-hydroxybenzoic acid efflux pump subunit AaeB, found in Escherichia coli (strain SMS-3-5 / SECEC).